The chain runs to 233 residues: Large ribosomal subunit protein uL1 (233 aa).

This sequence belongs to the universal ribosomal protein uL1 family. In terms of assembly, part of the 50S ribosomal subunit.

Its function is as follows. Binds directly to 23S rRNA. The L1 stalk is quite mobile in the ribosome, and is involved in E site tRNA release. Functionally, protein L1 is also a translational repressor protein, it controls the translation of the L11 operon by binding to its mRNA. The polypeptide is Large ribosomal subunit protein uL1 (Photorhabdus laumondii subsp. laumondii (strain DSM 15139 / CIP 105565 / TT01) (Photorhabdus luminescens subsp. laumondii)).